Reading from the N-terminus, the 1068-residue chain is Phosphatidylinositol 4,5-bisphosphate 3-kinase catalytic subunit alpha isoform (1068 aa).

Residues 16–105 enclose the PI3K-ABD domain; the sequence is MPPRILVECL…QPFLKVIEPV (90 aa). Residues 187 to 289 enclose the PI3K-RBD domain; sequence KGQIIVVIWV…GRMPNLMLMA (103 aa). Residues 330 to 487 form the C2 PI3K-type domain; sequence INSALRIKIL…DWFSSVVKFP (158 aa). The 178-residue stretch at 517–694 folds into the PIK helical domain; it reads LARDNELREN…GLLLESYCRA (178 aa). Residues 765 to 1051 form the PI3K/PI4K catalytic domain; that stretch reads RLEECRIMSS…QMNDAHHGGW (287 aa). The tract at residues 771-777 is G-loop; the sequence is IMSSAKR. Residues 912–920 form a catalytic loop region; that stretch reads GIGDRHNSN. Positions 931 to 957 are activation loop; that stretch reads HIDFGHFLDHKKKKFGYKRERVPFVLT.

It belongs to the PI3/PI4-kinase family. As to quaternary structure, heterodimer of a catalytic subunit PIK3CA and a p85 regulatory subunit (PIK3R1, PIK3R2 or PIK3R3). Interacts with IRS1 in nuclear extracts. Interacts with RUFY3. Interacts with RASD2. Interacts with APPL1. Interacts with HRAS and KRAS. Interaction with HRAS/KRAS is required for PI3K pathway signaling and cell proliferation stimulated by EGF and FGF2. Interacts with FAM83B; activates the PI3K/AKT signaling cascade.

It catalyses the reaction a 1,2-diacyl-sn-glycero-3-phospho-(1D-myo-inositol-4,5-bisphosphate) + ATP = a 1,2-diacyl-sn-glycero-3-phospho-(1D-myo-inositol-3,4,5-trisphosphate) + ADP + H(+). The catalysed reaction is a 1,2-diacyl-sn-glycero-3-phospho-(1D-myo-inositol) + ATP = a 1,2-diacyl-sn-glycero-3-phospho-(1D-myo-inositol-3-phosphate) + ADP + H(+). The enzyme catalyses L-seryl-[protein] + ATP = O-phospho-L-seryl-[protein] + ADP + H(+). It carries out the reaction 1,2-dioctanoyl-sn-glycero-3-phospho-(1D-myo-inositol-4,5-bisphosphate) + ATP = 1,2-dioctanoyl-sn-glycero-3-phospho-(1D-myo-inositol-3,4,5-trisphosphate) + ADP + H(+). It catalyses the reaction 1-octadecanoyl-2-(5Z,8Z,11Z,14Z)-eicosatetraenoyl-sn-glycero-3-phospho-1D-myo-inositol 4,5-bisphosphate + ATP = 1-octadecanoyl-2-(5Z,8Z,11Z,14Z-eicosatetraenoyl)-sn-glycero-3-phospho-(1D-myo-inositol 3,4,5-triphosphate) + ADP + H(+). Its pathway is phospholipid metabolism; phosphatidylinositol phosphate biosynthesis. Its function is as follows. Phosphoinositide-3-kinase (PI3K) phosphorylates phosphatidylinositol (PI) and its phosphorylated derivatives at position 3 of the inositol ring to produce 3-phosphoinositides. Uses ATP and PtdIns(4,5)P2 (phosphatidylinositol 4,5-bisphosphate) to generate phosphatidylinositol 3,4,5-trisphosphate (PIP3). PIP3 plays a key role by recruiting PH domain-containing proteins to the membrane, including AKT1 and PDPK1, activating signaling cascades involved in cell growth, survival, proliferation, motility and morphology. Participates in cellular signaling in response to various growth factors. Involved in the activation of AKT1 upon stimulation by receptor tyrosine kinases ligands such as EGF, insulin, IGF1, VEGFA and PDGF. Involved in signaling via insulin-receptor substrate (IRS) proteins. Essential in endothelial cell migration during vascular development through VEGFA signaling, possibly by regulating RhoA activity. Required for lymphatic vasculature development, possibly by binding to RAS and by activation by EGF and FGF2, but not by PDGF. Regulates invadopodia formation through the PDPK1-AKT1 pathway. Participates in cardiomyogenesis in embryonic stem cells through a AKT1 pathway. Participates in vasculogenesis in embryonic stem cells through PDK1 and protein kinase C pathway. Also has serine-protein kinase activity: phosphorylates PIK3R1 (p85alpha regulatory subunit), EIF4EBP1 and HRAS. Plays a role in the positive regulation of phagocytosis and pinocytosis. In Mus musculus (Mouse), this protein is Phosphatidylinositol 4,5-bisphosphate 3-kinase catalytic subunit alpha isoform (Pik3ca).